The primary structure comprises 70 residues: Cold shock protein CspV (70 aa).

One can recognise a CSD domain in the interval 7 to 67 (GSVKWFNETK…GKKGPQASNV (61 aa)).

It localises to the cytoplasm. The polypeptide is Cold shock protein CspV (cspV) (Vibrio cholerae serotype O1 (strain ATCC 39315 / El Tor Inaba N16961)).